The sequence spans 232 residues: Cilia- and flagella-associated protein 95 (232 aa).

Residues 1-96 (MDSSDSSCQE…PVWISETREK (96 aa)) lie on the Extracellular side of the membrane. An N-linked (GlcNAc...) asparagine glycan is attached at Asn-75. Residues 97-115 (MAQVCLNTKLAKIKSKALL) traverse the membrane as a helical segment. Topologically, residues 116–232 (NEETMNSGII…TGGPIAPFLK (117 aa)) are cytoplasmic. The segment at 153 to 163 (LTTYAEEYAPP) is mn.

Microtubule inner protein component of sperm flagellar doublet microtubules. Interacts with MYH9. Interacts with MYH10. In terms of tissue distribution, expressed in trachea multiciliated cells.

It is found in the cytoplasm. It localises to the cytoskeleton. The protein resides in the cilium axoneme. Its subcellular location is the flagellum axoneme. The protein localises to the cell membrane. Its function is as follows. Microtubule inner protein (MIP) part of the dynein-decorated doublet microtubules (DMTs) in cilia axoneme, which is required for motile cilia beating. This chain is Cilia- and flagella-associated protein 95, found in Bos taurus (Bovine).